The chain runs to 475 residues: Adenosylhomocysteinase (475 aa).

Substrate-binding residues include threonine 61, aspartate 140, and glutamate 200. An NAD(+)-binding site is contributed by 201–203; sequence TTT. Positions 230 and 234 each coordinate substrate. Residues asparagine 235, 264 to 269, glutamate 287, asparagine 322, 343 to 345, and asparagine 388 each bind NAD(+); these read GYGDVG and IGH.

It belongs to the adenosylhomocysteinase family. The cofactor is NAD(+).

The protein resides in the cytoplasm. The catalysed reaction is S-adenosyl-L-homocysteine + H2O = L-homocysteine + adenosine. Its pathway is amino-acid biosynthesis; L-homocysteine biosynthesis; L-homocysteine from S-adenosyl-L-homocysteine: step 1/1. In terms of biological role, may play a key role in the regulation of the intracellular concentration of adenosylhomocysteine. This is Adenosylhomocysteinase from Paracidovorax citrulli (strain AAC00-1) (Acidovorax citrulli).